Here is a 299-residue protein sequence, read N- to C-terminus: Biphenyl-2,3-diol 1,2-dioxygenase (299 aa).

2 VOC domains span residues 6-121 and 146-267; these read ELGY…IFYG and GIGH…FGWG. His-149, His-212, and Glu-263 together coordinate Fe cation.

Belongs to the extradiol ring-cleavage dioxygenase family. Homooctamer. The cofactor is Fe(2+).

The catalysed reaction is biphenyl-2,3-diol + O2 = 2-hydroxy-6-oxo-6-phenylhexa-2,4-dienoate + H(+). It participates in xenobiotic degradation; biphenyl degradation; 2-hydroxy-2,4-pentadienoate and benzoate from biphenyl: step 3/4. In Sphingomonas paucimobilis (Pseudomonas paucimobilis), this protein is Biphenyl-2,3-diol 1,2-dioxygenase (bphC).